The sequence spans 203 residues: Small ribosomal subunit protein uS4 (203 aa).

One can recognise an S4 RNA-binding domain in the interval Arg93–Ala155.

This sequence belongs to the universal ribosomal protein uS4 family. Part of the 30S ribosomal subunit. Contacts protein S5. The interaction surface between S4 and S5 is involved in control of translational fidelity.

One of the primary rRNA binding proteins, it binds directly to 16S rRNA where it nucleates assembly of the body of the 30S subunit. Functionally, with S5 and S12 plays an important role in translational accuracy. The chain is Small ribosomal subunit protein uS4 from Lactobacillus acidophilus (strain ATCC 700396 / NCK56 / N2 / NCFM).